The following is a 177-amino-acid chain: Probable DNA-directed RNA polymerase subunit delta (177 aa).

In terms of domain architecture, HTH HARE-type spans 14 to 83 (LSMIEVARAI…GENKWGLRSW (70 aa)). Acidic residues-rich tracts occupy residues 117–134 (GDDDAIDYGHDDPEDEDN) and 142–157 (EYDDENPDDEKDEVES). Positions 117–164 (GDDDAIDYGHDDPEDEDNYPGSVSSEYDDENPDDEKDEVESYDQKSTK) are disordered.

The protein belongs to the RpoE family. As to quaternary structure, RNAP is composed of a core of 2 alpha, a beta and a beta' subunits. The core is associated with a delta subunit and one of several sigma factors.

Participates in both the initiation and recycling phases of transcription. In the presence of the delta subunit, RNAP displays an increased specificity of transcription, a decreased affinity for nucleic acids, and an increased efficiency of RNA synthesis because of enhanced recycling. The sequence is that of Probable DNA-directed RNA polymerase subunit delta from Streptococcus suis (strain 98HAH33).